Consider the following 443-residue polypeptide: Methyl-coenzyme M reductase II subunit beta (443 aa).

Residue Tyr-367 participates in coenzyme M binding. Residue Gly-369 coordinates coenzyme B.

This sequence belongs to the methyl-coenzyme M reductase beta subunit family. MCR is a hexamer of two alpha, two beta, and two gamma chains, forming a dimer of heterotrimers. It depends on coenzyme F430 as a cofactor.

It carries out the reaction coenzyme B + methyl-coenzyme M = methane + coenzyme M-coenzyme B heterodisulfide. It functions in the pathway one-carbon metabolism; methyl-coenzyme M reduction; methane from methyl-coenzyme M: step 1/1. Functionally, component of the methyl-coenzyme M reductase (MCR) I that catalyzes the reductive cleavage of methyl-coenzyme M (CoM-S-CH3 or 2-(methylthio)ethanesulfonate) using coenzyme B (CoB or 7-mercaptoheptanoylthreonine phosphate) as reductant which results in the production of methane and the mixed heterodisulfide of CoB and CoM (CoM-S-S-CoB). This is the final step in methanogenesis. In Methanothermobacter marburgensis (strain ATCC BAA-927 / DSM 2133 / JCM 14651 / NBRC 100331 / OCM 82 / Marburg) (Methanobacterium thermoautotrophicum), this protein is Methyl-coenzyme M reductase II subunit beta.